A 96-amino-acid chain; its full sequence is Venom protein 3.1 (96 aa).

The first 25 residues, 1 to 25, serve as a signal peptide directing secretion; sequence MKFSLISVFLFAVFLSNENIFQAIA. The segment at 45-84 is disordered; sequence EAVMSSSLTNEEESRNWPHRATRNTLEKGQKRSPAARSEI.

Belongs to the non-disulfide-bridged peptide (NDBP) superfamily. In terms of tissue distribution, expressed by the venom gland.

Its subcellular location is the secreted. The chain is Venom protein 3.1 from Lychas mucronatus (Chinese swimming scorpion).